The primary structure comprises 172 residues: Putative phosphoesterase Bcer98_0945 (172 aa).

Histidine 34 functions as the Proton donor in the catalytic mechanism. 2 consecutive short sequence motifs (HXTX) follow at residues histidine 34 to leucine 37 and histidine 115 to isoleucine 118. The Proton acceptor role is filled by histidine 115.

This sequence belongs to the 2H phosphoesterase superfamily. YjcG family.

The chain is Putative phosphoesterase Bcer98_0945 from Bacillus cytotoxicus (strain DSM 22905 / CIP 110041 / 391-98 / NVH 391-98).